Here is a 343-residue protein sequence, read N- to C-terminus: uncharacterized protein (343 aa).

2 disordered regions span residues 1–27 (MIRE…ERMT) and 205–247 (SGGL…SKRQ). Residues 16-27 (RARDSRAQERMT) show a composition bias toward basic and acidic residues. The span at 219–228 (GQDDGNTDDG) shows a compositional bias: acidic residues. The span at 229–247 (NDVHQKGRGEVESKTSKRQ) shows a compositional bias: basic and acidic residues.

In terms of biological role, dispensable for normal development and fertility. This is an uncharacterized protein from Bos taurus (Bovine).